Consider the following 359-residue polypeptide: NAC domain-containing protein 45 (359 aa).

The NAC domain maps to 19-185; that stretch reads LPPGFRFHPT…EWVVCKVFHK (167 aa). Residues 130 to 191 mediate DNA binding; sequence VGMKKTLVFY…VFHKKGDDRE (62 aa).

In terms of tissue distribution, expressed in roots. Expressed at low levels in leaves, stems and panicles.

The protein resides in the nucleus. Transcription activator involved in responses to drought stress and salt stress. Transactivates the stress response genes LEA19 and PM19L. This is NAC domain-containing protein 45 from Oryza sativa subsp. japonica (Rice).